The primary structure comprises 352 residues: MVPQELIEKIKLISPGTELRKALDDIINANFGALIFLVDDPKKYEDIIQGGFWLDTDFSAEKLYELSKMDGAIVLSEDITKIYYANVHLVPDPTIPTGETGTRHRTAERLAKQTGKVVIAVSRRRNIISLYYKNYKYVVNQVDFLISKVTQAISTLEKYKDNFNKLLSELEVLELENRVTLADVVRTLAKGFELLRIVEEIRPYIVELGEEGRLARMQLRELTEDVDDLLVLLVMDYSSEEVDEEAAQDIMQDFVKKRDPSPISISRALGYDVQQVAQLDDVLVSARGYRLLKTVARIPLSIGYNVVRMFKTLDQISKASVEDLKKVEGIGEKRARAISESISSLKHRKTSE.

In terms of domain architecture, DAC spans Pro3–Asp143. ATP is bound by residues Gly71, Leu89, and Thr102–Thr106.

The protein belongs to the DisA family. Homooctamer. It depends on Mg(2+) as a cofactor.

It catalyses the reaction 2 ATP = 3',3'-c-di-AMP + 2 diphosphate. In terms of biological role, participates in a DNA-damage check-point. DisA forms globular foci that rapidly scan along the chromosomes searching for lesions. Functionally, also has diadenylate cyclase activity, catalyzing the condensation of 2 ATP molecules into cyclic di-AMP (c-di-AMP). c-di-AMP likely acts as a signaling molecule that may couple DNA integrity with a cellular process. The polypeptide is DNA integrity scanning protein DisA (Thermotoga petrophila (strain ATCC BAA-488 / DSM 13995 / JCM 10881 / RKU-1)).